The chain runs to 125 residues: Holo-[acyl-carrier-protein] synthase (125 aa).

The Mg(2+) site is built by Asp6 and Glu55.

The protein belongs to the P-Pant transferase superfamily. AcpS family. Mg(2+) serves as cofactor.

Its subcellular location is the cytoplasm. The enzyme catalyses apo-[ACP] + CoA = holo-[ACP] + adenosine 3',5'-bisphosphate + H(+). Functionally, transfers the 4'-phosphopantetheine moiety from coenzyme A to a Ser of acyl-carrier-protein. This Chlorobium phaeovibrioides (strain DSM 265 / 1930) (Prosthecochloris vibrioformis (strain DSM 265)) protein is Holo-[acyl-carrier-protein] synthase.